The chain runs to 208 residues: Small ribosomal subunit protein uS4 (208 aa).

Positions 98–163 (TRLDNVVFRL…TPLFKEIVDG (66 aa)) constitute an S4 RNA-binding domain.

It belongs to the universal ribosomal protein uS4 family. In terms of assembly, part of the 30S ribosomal subunit. Contacts protein S5. The interaction surface between S4 and S5 is involved in control of translational fidelity.

One of the primary rRNA binding proteins, it binds directly to 16S rRNA where it nucleates assembly of the body of the 30S subunit. In terms of biological role, with S5 and S12 plays an important role in translational accuracy. This chain is Small ribosomal subunit protein uS4, found in Heliobacterium modesticaldum (strain ATCC 51547 / Ice1).